Reading from the N-terminus, the 408-residue chain is Multidrug resistance protein MdtG (408 aa).

Helical transmembrane passes span 16 to 36 (LIVA…VMPF), 58 to 78 (IVFS…GGLA), 92 to 112 (LGMG…QFLI), 115 to 135 (ALLG…ATQV), 146 to 166 (TLST…GLLA), 173 to 193 (PVFF…LFCI), 224 to 244 (LFVT…ILTL), 256 to 276 (VAFI…LSAP), 290 to 310 (ILIT…YVQT), 319 to 339 (FLLG…LVYN), and 378 to 398 (AVFL…WNSL).

The protein belongs to the major facilitator superfamily. DHA1 family. MdtG (TC 2.A.1.2.20) subfamily.

Its subcellular location is the cell inner membrane. Confers resistance to fosfomycin and deoxycholate. The chain is Multidrug resistance protein MdtG from Escherichia coli O6:K15:H31 (strain 536 / UPEC).